A 465-amino-acid chain; its full sequence is MTQNQLDKKSEAWSALFSEPMSDLVKRYTASVFFDKRLWQADIEGSLAHAGMLAAQGIIGKQDHAEIERGMAQIRAEIESGAFEWKLDLEDVHLNIEARLTQLVGDAGKRLHTGRSRNDQVATDVRLWLRGEIDLIAELLVALQLSLVDIAEKNVEVILPGFTHLQVAQPVSFGHHMLAYVEMFSRDAERLQDVRKRVNRLPLGAAALAGTSYPLDRELVARTLKMDGVCQNSLDAVSDRDFAIEFTAAASLCMVHVSRMSEELILWMSQNFGFIQIADRFTTGSSIMPQKKNPDVPELARGKTGRVVGHLMALITLMKGQPLAYNKDNQEDKEPLFDTVDTLKDTLRIFAEMIGGITVKPEAMEAAALRGYATATDLADYLVKKGLPFRDAHETVAHAVKAATSHKVDLAELPLAVLQQFNPNIEKDVYDVLSLRGSLNARNILGGTAPAQVKAQIARHRARLA.

Belongs to the lyase 1 family. Argininosuccinate lyase subfamily.

It localises to the cytoplasm. It catalyses the reaction 2-(N(omega)-L-arginino)succinate = fumarate + L-arginine. It functions in the pathway amino-acid biosynthesis; L-arginine biosynthesis; L-arginine from L-ornithine and carbamoyl phosphate: step 3/3. The protein is Argininosuccinate lyase of Variovorax paradoxus (strain S110).